We begin with the raw amino-acid sequence, 104 residues long: Integration host factor subunit beta (104 aa).

Belongs to the bacterial histone-like protein family. In terms of assembly, heterodimer of an alpha and a beta chain.

In terms of biological role, this protein is one of the two subunits of integration host factor, a specific DNA-binding protein that functions in genetic recombination as well as in transcriptional and translational control. This chain is Integration host factor subunit beta, found in Chromobacterium violaceum (strain ATCC 12472 / DSM 30191 / JCM 1249 / CCUG 213 / NBRC 12614 / NCIMB 9131 / NCTC 9757 / MK).